A 535-amino-acid chain; its full sequence is CTP synthase (535 aa).

Residues 1–267 (MTKYIFVTGG…DQIVCDHLKL (267 aa)) are amidoligase domain. S13 lines the CTP pocket. S13 serves as a coordination point for UTP. 14–19 (SLGKGI) serves as a coordination point for ATP. Residue Y54 participates in L-glutamine binding. An ATP-binding site is contributed by D71. The Mg(2+) site is built by D71 and E141. Residues 148–150 (DIE), 188–193 (KTKPTQ), and K224 contribute to the CTP site. Residues 188–193 (KTKPTQ) and K224 each bind UTP. 240-242 (RDA) is a binding site for ATP. A Glutamine amidotransferase type-1 domain is found at 292–534 (KIALVGKYVE…VRASITNKES (243 aa)). G354 contributes to the L-glutamine binding site. Residue C381 is the Nucleophile; for glutamine hydrolysis of the active site. L-glutamine-binding positions include 382–385 (LGMQ), E405, and R462. Active-site residues include H507 and E509.

Belongs to the CTP synthase family. In terms of assembly, homotetramer.

The catalysed reaction is UTP + L-glutamine + ATP + H2O = CTP + L-glutamate + ADP + phosphate + 2 H(+). The enzyme catalyses L-glutamine + H2O = L-glutamate + NH4(+). It carries out the reaction UTP + NH4(+) + ATP = CTP + ADP + phosphate + 2 H(+). It participates in pyrimidine metabolism; CTP biosynthesis via de novo pathway; CTP from UDP: step 2/2. Allosterically activated by GTP, when glutamine is the substrate; GTP has no effect on the reaction when ammonia is the substrate. The allosteric effector GTP functions by stabilizing the protein conformation that binds the tetrahedral intermediate(s) formed during glutamine hydrolysis. Inhibited by the product CTP, via allosteric rather than competitive inhibition. Functionally, catalyzes the ATP-dependent amination of UTP to CTP with either L-glutamine or ammonia as the source of nitrogen. Regulates intracellular CTP levels through interactions with the four ribonucleotide triphosphates. The protein is CTP synthase of Bacillus cereus (strain G9842).